The following is a 313-amino-acid chain: Pre-mRNA-splicing factor 38A (313 aa).

The tract at residues 1–179 (MANRTVKDAN…VLEEAELLDP (179 aa)) is N-terminal protein interaction domain. The stretch at 172–201 (EEAELLDPRISALEEDLDEVETSEEEDDED) forms a coiled coil. Residues 182-313 (SALEEDLDEV…SHKRSRRGNE (132 aa)) are disordered. Residues 184–202 (LEEDLDEVETSEEEDDEDE) show a composition bias toward acidic residues. Over residues 203 to 224 (KPERMQSPEPHRRSYRDMDRPR) the composition is skewed to basic and acidic residues. Basic residues-rich tracts occupy residues 225 to 250 (RSPS…RSPS), 260 to 294 (HRSK…RSHS), and 302 to 313 (KKSHKRSRRGNE).

The protein belongs to the PRP38 family. In terms of assembly, component of the spliceosome B complex.

The protein resides in the nucleus. Its function is as follows. Involved in pre-mRNA splicing as a component of the spliceosome. In Danio rerio (Zebrafish), this protein is Pre-mRNA-splicing factor 38A (prpf38a).